The primary structure comprises 246 residues: uncharacterized protein (246 aa).

The protein belongs to the IIV-6 170L family.

This is an uncharacterized protein from Acheta domesticus (House cricket).